The primary structure comprises 75 residues: uncharacterized protein (75 aa).

The N-terminal stretch at Met1–Ser19 is a signal peptide.

Nacreous layer of shell (at protein level).

It localises to the secreted. This is an uncharacterized protein from Margaritifera margaritifera (Freshwater pearl mussel).